The primary structure comprises 186 residues: MFLMKDIVRDGDPVLRQEAADVTFPLSEEDQQLAKDLMEYLVVSQDPEQCKKYGLRAGVGLAAPQVGVSKKMASVLVPPVEEDGKSPFTDVIINPVIISESVQAGALTEGEGCLSVDKDVPGFVPRHDRITLRYYDVNGEKHQVRLKNYPAIVCQHEIDHLHGTLFYDHINKDQPFSRDDDMIMIE.

2 residues coordinate Fe cation: Cys113 and His156. Residue Glu157 is part of the active site. His160 contributes to the Fe cation binding site.

The protein belongs to the polypeptide deformylase family. Requires Fe(2+) as cofactor.

It catalyses the reaction N-terminal N-formyl-L-methionyl-[peptide] + H2O = N-terminal L-methionyl-[peptide] + formate. Functionally, removes the formyl group from the N-terminal Met of newly synthesized proteins. Requires at least a dipeptide for an efficient rate of reaction. N-terminal L-methionine is a prerequisite for activity but the enzyme has broad specificity at other positions. The sequence is that of Peptide deformylase from Levilactobacillus brevis (strain ATCC 367 / BCRC 12310 / CIP 105137 / JCM 1170 / LMG 11437 / NCIMB 947 / NCTC 947) (Lactobacillus brevis).